The sequence spans 394 residues: Elongation factor Tu (394 aa).

In terms of domain architecture, tr-type G spans 10-204; that stretch reads KPHINVGTIG…FLDSYIPEPK (195 aa). The tract at residues 19 to 26 is G1; it reads GHVDHGKT. 19 to 26 is a GTP binding site; that stretch reads GHVDHGKT. T26 lines the Mg(2+) pocket. The G2 stretch occupies residues 60-64; it reads GITIN. A G3 region spans residues 81–84; it reads DCPG. Residues 81 to 85 and 136 to 139 each bind GTP; these read DCPGH and NKCD. The tract at residues 136 to 139 is G4; the sequence is NKCD. The tract at residues 174-176 is G5; that stretch reads SAL.

This sequence belongs to the TRAFAC class translation factor GTPase superfamily. Classic translation factor GTPase family. EF-Tu/EF-1A subfamily. As to quaternary structure, monomer.

It localises to the cytoplasm. It catalyses the reaction GTP + H2O = GDP + phosphate + H(+). Functionally, GTP hydrolase that promotes the GTP-dependent binding of aminoacyl-tRNA to the A-site of ribosomes during protein biosynthesis. This Buchnera aphidicola subsp. Acyrthosiphon pisum (strain 5A) protein is Elongation factor Tu.